Consider the following 148-residue polypeptide: Putative adenylate kinase (148 aa).

ATP is bound by residues Gly9, Gly11, Lys12, Ser13, and Thr14. The interval 28–44 (EGNALAVKYGCLSGDEV) is NMP. Residues 91-101 (DRGYSPEKIDE) are LID. Residue Arg92 participates in ATP binding.

Belongs to the adenylate kinase family. AK6 subfamily. In terms of assembly, interacts with uS11. Not a structural component of 40S pre-ribosomes, but transiently interacts with them by binding to uS11.

The catalysed reaction is AMP + ATP = 2 ADP. It catalyses the reaction ATP + H2O = ADP + phosphate + H(+). In terms of biological role, broad-specificity nucleoside monophosphate (NMP) kinase that catalyzes the reversible transfer of the terminal phosphate group between nucleoside triphosphates and monophosphates. Also has ATPase activity. Involved in the late maturation steps of the 30S ribosomal particles, specifically 16S rRNA maturation. While NMP activity is not required for ribosome maturation, ATPase activity is. Associates transiently with small ribosomal subunit protein uS11. ATP hydrolysis breaks the interaction with uS11. May temporarily remove uS11 from the ribosome to enable a conformational change of the ribosomal RNA that is needed for the final maturation step of the small ribosomal subunit. The chain is Putative adenylate kinase from Thermoplasma acidophilum (strain ATCC 25905 / DSM 1728 / JCM 9062 / NBRC 15155 / AMRC-C165).